A 133-amino-acid polypeptide reads, in one-letter code: Putative pre-16S rRNA nuclease (133 aa).

The protein belongs to the YqgF nuclease family.

The protein resides in the cytoplasm. Could be a nuclease involved in processing of the 5'-end of pre-16S rRNA. In Alcanivorax borkumensis (strain ATCC 700651 / DSM 11573 / NCIMB 13689 / SK2), this protein is Putative pre-16S rRNA nuclease.